The sequence spans 150 residues: 3-hydroxyacyl-[acyl-carrier-protein] dehydratase FabZ (150 aa).

H53 is an active-site residue.

Belongs to the thioester dehydratase family. FabZ subfamily.

The protein localises to the cytoplasm. The enzyme catalyses a (3R)-hydroxyacyl-[ACP] = a (2E)-enoyl-[ACP] + H2O. Involved in unsaturated fatty acids biosynthesis. Catalyzes the dehydration of short chain beta-hydroxyacyl-ACPs and long chain saturated and unsaturated beta-hydroxyacyl-ACPs. The polypeptide is 3-hydroxyacyl-[acyl-carrier-protein] dehydratase FabZ (Photorhabdus laumondii subsp. laumondii (strain DSM 15139 / CIP 105565 / TT01) (Photorhabdus luminescens subsp. laumondii)).